A 675-amino-acid chain; its full sequence is Rho GTPase-activating protein 40 (675 aa).

Disordered stretches follow at residues 95–118 (RDELREEDSGGNEGQLPEEGEAES) and 187–218 (KMSSENGDSGMKGAQLSSGASKFPPAAEPGGL). Acidic residues predominate over residues 103 to 116 (SGGNEGQLPEEGEA). The Rho-GAP domain occupies 323–522 (VPLDSLLEAD…IMVHYQDLLW (200 aa)).

In terms of biological role, GTPase activator for the Rho-type GTPases by converting them to an inactive GDP-bound state. The chain is Rho GTPase-activating protein 40 from Homo sapiens (Human).